We begin with the raw amino-acid sequence, 126 residues long: Prostate and testis expressed protein 1 (126 aa).

The N-terminal stretch at 1–21 (MDKSLLLELPILLCCFRALSG) is a signal peptide. The region spanning 46-125 (VQCRMCHLQF…CRSHDLCNED (80 aa)) is the UPAR/Ly6 domain. 4 disulfide bridges follow: Cys-48-Cys-75, Cys-51-Cys-60, Cys-67-Cys-94, and Cys-98-Cys-115.

This sequence belongs to the PATE family. As to expression, expressed specifically in prostate cancer, normal prostate, and testis. Expressed in the epithelial cells of the prostate cancer and normal prostate tissues.

It localises to the secreted. The sequence is that of Prostate and testis expressed protein 1 (PATE1) from Homo sapiens (Human).